Reading from the N-terminus, the 50-residue chain is Large ribosomal subunit protein bL33 (50 aa).

It belongs to the bacterial ribosomal protein bL33 family.

The chain is Large ribosomal subunit protein bL33 from Mycoplasmopsis synoviae (strain 53) (Mycoplasma synoviae).